The primary structure comprises 202 residues: Nitrophorin-3 (202 aa).

Residues 1-23 form the signal peptide; it reads MEPYSALLAVTILCLTSTMGVSG. 2 disulfides stabilise this stretch: Cys25-Cys144 and Cys62-Cys193. His80 contributes to the heme binding site.

This sequence belongs to the calycin superfamily. Nitrophorin family. As to quaternary structure, interacts weakly with host coagulation factor IX (F9) (inactive and activated) in the presence of Ca(2+). Salivary gland (at protein level).

It localises to the secreted. In terms of biological role, heme-based protein that deliver nitric oxide gas (NO) to the victim while feeding, resulting in vasodilation and inhibition of platelet aggregation. Reversibly binds nitric oxide (NO). Also binds tightly to histamine, which is released by the host to induce wound healing. Exhibits weak anticoagulant activity. The chain is Nitrophorin-3 from Rhodnius prolixus (Triatomid bug).